Here is a 338-residue protein sequence, read N- to C-terminus: Ornithine carbamoyltransferase, catabolic (338 aa).

Carbamoyl phosphate-binding positions include 65-68 (STRT), glutamine 92, arginine 116, and 143-146 (HPTQ). Residues asparagine 175, aspartate 239, and 243–244 (SM) contribute to the L-ornithine site. Residues 280 to 281 (CL) and arginine 325 each bind carbamoyl phosphate.

The protein belongs to the aspartate/ornithine carbamoyltransferase superfamily. OTCase family.

The protein resides in the cytoplasm. It carries out the reaction carbamoyl phosphate + L-ornithine = L-citrulline + phosphate + H(+). It participates in amino-acid degradation; L-arginine degradation via ADI pathway; carbamoyl phosphate from L-arginine: step 2/2. Functionally, reversibly catalyzes the transfer of the carbamoyl group from carbamoyl phosphate (CP) to the N(epsilon) atom of ornithine (ORN) to produce L-citrulline. This Treponema denticola (strain ATCC 35405 / DSM 14222 / CIP 103919 / JCM 8153 / KCTC 15104) protein is Ornithine carbamoyltransferase, catabolic.